The primary structure comprises 251 residues: Protein FAM216A (251 aa).

The span at 1 to 16 (MPNQGPVSDWTECSSS) shows a compositional bias: polar residues. The interval 1–49 (MPNQGPVSDWTECSSSAEPPAVARAEGGGGGSAGHSYYQNSKDRIKDGH) is disordered.

This sequence belongs to the FAM216 family.

This Bos taurus (Bovine) protein is Protein FAM216A (FAM216A).